The chain runs to 318 residues: COP9 signalosome complex subunit 6 (318 aa).

The MPN domain maps to 32-165; the sequence is VALHPLVILN…VSVYESVIDI (134 aa).

This sequence belongs to the peptidase M67A family. CSN6 subfamily. Component of the CSN complex, probably composed of cops1, cops2, cops3, cops4, cops5, cops6, cops7, cops8 and cops9.

Its subcellular location is the cytoplasm. The protein localises to the nucleus. Component of the COP9 signalosome complex (CSN), a complex involved in various cellular and developmental processes. The CSN complex is an essential regulator of the ubiquitin (Ubl) conjugation pathway by mediating the deneddylation of the cullin subunits of E3 ligase complexes, leading to modify the Ubl ligase activity. In Xenopus laevis (African clawed frog), this protein is COP9 signalosome complex subunit 6 (cops6).